We begin with the raw amino-acid sequence, 872 residues long: Facilitated trehalose transporter Tret1 (872 aa).

Disordered stretches follow at residues 1–40 (MSGRDNRGAGGGGGGGGGGSGGGHHHHQPLSSAMGKLKEK), 53–217 (VESN…KATS), 262–281 (SSSEEEFHKTRREFQGRKHQ), and 293–315 (KVLQGSSTDSDEEGDDAEHKRLI). Topologically, residues 1–406 (MSGRDNRGAG…VYRPTTNPIY (406 aa)) are cytoplasmic. Residues 8-22 (GAGGGGGGGGGGSGG) show a composition bias toward gly residues. Composition is skewed to low complexity over residues 55–68 (SNLSTSNTATSLDT), 84–98 (RHPQQSPSQSQQQQR), and 121–132 (PPTQQQPQQQHQ). Phosphoserine occurs at positions 262, 263, and 264. 2 positions are modified to phosphoserine: S334 and S336. Residues 340 to 361 (FLTSRQHFQQQRSISTDSRKSR) are disordered. Residues 344 to 355 (RQHFQQQRSIST) are compositionally biased toward polar residues. Residues 407–427 (IWTQVLAALSVSLGSLVVGFV) form a helical membrane-spanning segment. The Extracellular segment spans residues 428 to 454 (SAYTSPALITMTNGNITSFEVTPQAAS). The N-linked (GlcNAc...) asparagine glycan is linked to N442. The chain crosses the membrane as a helical span at residues 455–475 (WVGGIMPLAGLLGGIAGGPFI). The Cytoplasmic segment spans residues 476–488 (EYLGRRNTILTTA). Residues 489-509 (VPFIVSSLLIACAVNITMVLL) traverse the membrane as a helical segment. Residues 510-511 (GR) lie on the Extracellular side of the membrane. Residues 512–532 (FLAGFCVGIASLSLPVYLGET) traverse the membrane as a helical segment. Residues 533 to 538 (VQPEVR) are Cytoplasmic-facing. A helical transmembrane segment spans residues 539–559 (GTLGLLPTAFGNIGILLCFVA). At 560–566 (GTYMDWS) the chain is on the extracellular side. Residues 567–587 (MLAFLGAALPVPFLILMFLIP) traverse the membrane as a helical segment. Residues 588–650 (ETPRWYVSRG…ELLKRNNLKP (63 aa)) lie on the Cytoplasmic side of the membrane. The helical transmembrane segment at 651-671 (LSISLGLMFFQQLSGINAVIF) threads the bilayer. Residues 672–687 (YTVQIFKDAGSTIDGN) are Extracellular-facing. Residues 688 to 708 (VCTIIVGIVNFMATFIGIILI) form a helical membrane-spanning segment. Residues 709-714 (DRAGRK) are Cytoplasmic-facing. A helical membrane pass occupies residues 715 to 735 (ILLYVSNVAMIITLFVLGGFF). The Extracellular segment spans residues 736–755 (YCKDKAGIDVSNVGWLPLSC). Residues 756-776 (FVVYILGFSLGFGPIPWLMMG) traverse the membrane as a helical segment. Residues 777 to 784 (EILPAKIR) lie on the Cytoplasmic side of the membrane. Residues 785 to 803 (GSAASVATAFNWTCTFVVT) form a helical membrane-spanning segment. Residues 804 to 816 (KTFQDMLDVIGSY) lie on the Extracellular side of the membrane. A helical transmembrane segment spans residues 817 to 837 (GAFWLFGAICFIGLFFVIIYV). Over 838 to 872 (PETQGKTLEDIERKMMGRVRRMSSVANIKPLSFNM) the chain is Cytoplasmic. Phosphoserine occurs at positions 860 and 861.

The protein belongs to the major facilitator superfamily. Sugar transporter (TC 2.A.1.1) family. Trehalose transporter subfamily.

It localises to the cell membrane. Its function is as follows. Low-capacity facilitative transporter for trehalose. Does not transport maltose, sucrose or lactose. Mediates the bidirectional transfer of trehalose. Responsible for the transport of trehalose synthesized in the fat body and the incorporation of trehalose into other tissues that require a carbon source, thereby regulating trehalose levels in the hemolymph. The chain is Facilitated trehalose transporter Tret1 from Drosophila willistoni (Fruit fly).